The following is a 372-amino-acid chain: PqqA peptide cyclase (372 aa).

Positions 4–219 (APPPLSVLLE…VDTARRELGD (216 aa)) constitute a Radical SAM core domain. The [4Fe-4S] cluster site is built by C18, C22, and C25. Positions 342 to 372 (ATAEREAAAPAPEFIYRRPERPAPATADTLE) are disordered.

It belongs to the radical SAM superfamily. PqqE family. As to quaternary structure, interacts with PqqD. The interaction is necessary for activity of PqqE. [4Fe-4S] cluster is required as a cofactor.

It carries out the reaction [PQQ precursor protein] + S-adenosyl-L-methionine = E-Y cross-linked-[PQQ precursor protein] + 5'-deoxyadenosine + L-methionine + H(+). It participates in cofactor biosynthesis; pyrroloquinoline quinone biosynthesis. Catalyzes the cross-linking of a glutamate residue and a tyrosine residue in the PqqA protein as part of the biosynthesis of pyrroloquinoline quinone (PQQ). This is PqqA peptide cyclase from Xanthomonas oryzae pv. oryzae (strain MAFF 311018).